A 367-amino-acid chain; its full sequence is Alanine racemase (367 aa).

Lysine 40 acts as the Proton acceptor; specific for D-alanine in catalysis. Lysine 40 is modified (N6-(pyridoxal phosphate)lysine). Residue arginine 136 coordinates substrate. Tyrosine 263 acts as the Proton acceptor; specific for L-alanine in catalysis. Methionine 310 lines the substrate pocket.

Belongs to the alanine racemase family. It depends on pyridoxal 5'-phosphate as a cofactor.

It carries out the reaction L-alanine = D-alanine. The protein operates within amino-acid biosynthesis; D-alanine biosynthesis; D-alanine from L-alanine: step 1/1. Functionally, catalyzes the interconversion of L-alanine and D-alanine. May also act on other amino acids. This chain is Alanine racemase (alr), found in Lactococcus lactis subsp. cremoris (strain SK11).